The following is a 501-amino-acid chain: L-arabinose isomerase (501 aa).

Mn(2+)-binding residues include Glu-306, Glu-333, His-350, and His-449.

Belongs to the arabinose isomerase family. Requires Mn(2+) as cofactor.

It catalyses the reaction beta-L-arabinopyranose = L-ribulose. Its pathway is carbohydrate degradation; L-arabinose degradation via L-ribulose; D-xylulose 5-phosphate from L-arabinose (bacterial route): step 1/3. Catalyzes the conversion of L-arabinose to L-ribulose. This chain is L-arabinose isomerase, found in Herpetosiphon aurantiacus (strain ATCC 23779 / DSM 785 / 114-95).